The chain runs to 347 residues: uncharacterized protein (347 aa).

This is an uncharacterized protein from Caenorhabditis elegans.